Reading from the N-terminus, the 471-residue chain is Neuraminidase (471 aa).

At 1-6 the chain is on the intravirion side; it reads MNPNQK. A helical transmembrane segment spans residues 7-27; it reads LFALSGVAIALSVLNLLIGIS. The involved in apical transport and lipid raft association stretch occupies residues 11 to 33; that stretch reads SGVAIALSVLNLLIGISNVGLNV. Topologically, residues 28-471 are virion surface; sequence NVGLNVSLHL…PDGAQIQYFS (444 aa). 7 N-linked (GlcNAc...) asparagine; by host glycosylation sites follow: Asn-32, Asn-47, Asn-56, Asn-57, Asn-67, Asn-68, and Asn-87. Residues 36 to 87 are hypervariable stalk region; it reads HLKGAGTKQEENLTCTTITQNNTTVVENTYVNNTTIITKEPEFRAPSYLLLN. A head of neuraminidase region spans residues 90 to 471; sequence LCNVEGWVVV…PDGAQIQYFS (382 aa). 8 disulfides stabilise this stretch: Cys-91-Cys-419, Cys-123-Cys-128, Cys-183-Cys-230, Cys-232-Cys-237, Cys-278-Cys-291, Cys-280-Cys-289, Cys-318-Cys-336, and Cys-423-Cys-450. Arg-117 serves as a coordination point for substrate. An N-linked (GlcNAc...) asparagine; by host glycan is attached at Asn-145. Asp-150 acts as the Proton donor/acceptor in catalysis. Substrate is bound at residue Arg-151. N-linked (GlcNAc...) asparagine; by host glycans are attached at residues Asn-200 and Asn-234. Substrate is bound at residue 276–277; that stretch reads EE. Arg-292 is a binding site for substrate. Residues Asp-293, Gly-297, and Asp-324 each contribute to the Ca(2+) site. Position 371 (Arg-371) interacts with substrate. A glycan (N-linked (GlcNAc...) asparagine; by host) is linked at Asn-401. Residue Tyr-405 is the Nucleophile of the active site.

Belongs to the glycosyl hydrolase 34 family. In terms of assembly, homotetramer. Ca(2+) serves as cofactor. N-glycosylated.

The protein localises to the virion membrane. It is found in the host apical cell membrane. The catalysed reaction is Hydrolysis of alpha-(2-&gt;3)-, alpha-(2-&gt;6)-, alpha-(2-&gt;8)- glycosidic linkages of terminal sialic acid residues in oligosaccharides, glycoproteins, glycolipids, colominic acid and synthetic substrates.. Its activity is regulated as follows. Inhibited by the neuraminidase inhibitors zanamivir (Relenza) and oseltamivir (Tamiflu). These drugs interfere with the release of progeny virus from infected cells and are effective against all influenza strains. Resistance to neuraminidase inhibitors is quite rare. Functionally, catalyzes the removal of terminal sialic acid residues from viral and cellular glycoconjugates. Cleaves off the terminal sialic acids on the glycosylated HA during virus budding to facilitate virus release. Additionally helps virus spread through the circulation by further removing sialic acids from the cell surface. These cleavages prevent self-aggregation and ensure the efficient spread of the progeny virus from cell to cell. Otherwise, infection would be limited to one round of replication. Described as a receptor-destroying enzyme because it cleaves a terminal sialic acid from the cellular receptors. May facilitate viral invasion of the upper airways by cleaving the sialic acid moieties on the mucin of the airway epithelial cells. Likely to plays a role in the budding process through its association with lipid rafts during intracellular transport. May additionally display a raft-association independent effect on budding. Plays a role in the determination of host range restriction on replication and virulence. Sialidase activity in late endosome/lysosome traffic seems to enhance virus replication. This Aves (Horse) protein is Neuraminidase.